The chain runs to 201 residues: Diadenylate cyclase CdaS (201 aa).

Residues 54 to 201 (QTLAATYYIQ…LNGILYTISL (148 aa)) form the DAC domain.

This sequence belongs to the adenylate cyclase family. DacB/CdaS subfamily. Probably forms a homohexamer. It depends on Mg(2+) as a cofactor.

The catalysed reaction is 2 ATP = 3',3'-c-di-AMP + 2 diphosphate. Functionally, one of 3 paralogous diadenylate cyclases (DAC) in this bacteria catalyzing the condensation of 2 ATP molecules into cyclic di-AMP (c-di-AMP). It has slow DAC activity with ADP as a substrate and may have weak ADPase activity. Required for efficient spore formation, whereas in B.subtilis, it is required for efficient spore germination. It is produced under the control of different sigma factors in the two bacteria. It is also required for parasporal crystal formation. In Bacillus thuringiensis (strain BMB171), this protein is Diadenylate cyclase CdaS.